Consider the following 56-residue polypeptide: uncharacterized protein (56 aa).

The chain crosses the membrane as a helical span at residues 33-53; that stretch reads INIIYLAIMKIIMNIIMMIMI.

The protein resides in the host membrane. This is an uncharacterized protein from Bos taurus (Bovine).